We begin with the raw amino-acid sequence, 194 residues long: Imidazoleglycerol-phosphate dehydratase (194 aa).

This sequence belongs to the imidazoleglycerol-phosphate dehydratase family.

Its subcellular location is the cytoplasm. It carries out the reaction D-erythro-1-(imidazol-4-yl)glycerol 3-phosphate = 3-(imidazol-4-yl)-2-oxopropyl phosphate + H2O. The protein operates within amino-acid biosynthesis; L-histidine biosynthesis; L-histidine from 5-phospho-alpha-D-ribose 1-diphosphate: step 6/9. This is Imidazoleglycerol-phosphate dehydratase from Listeria innocua serovar 6a (strain ATCC BAA-680 / CLIP 11262).